Here is a 170-residue protein sequence, read N- to C-terminus: UPF0316 protein CLK_3798 (170 aa).

The next 2 membrane-spanning stretches (helical) occupy residues Met-1–Ile-21 and Ile-36–Ile-56.

Belongs to the UPF0316 family.

It localises to the cell membrane. The polypeptide is UPF0316 protein CLK_3798 (Clostridium botulinum (strain Loch Maree / Type A3)).